The chain runs to 526 residues: Bifunctional purine biosynthesis protein PurH (526 aa).

Residues 1-147 (MSSIKRALIS…KNWKHVAIVT (147 aa)) enclose the MGS-like domain.

The protein belongs to the PurH family.

The catalysed reaction is (6R)-10-formyltetrahydrofolate + 5-amino-1-(5-phospho-beta-D-ribosyl)imidazole-4-carboxamide = 5-formamido-1-(5-phospho-D-ribosyl)imidazole-4-carboxamide + (6S)-5,6,7,8-tetrahydrofolate. It catalyses the reaction IMP + H2O = 5-formamido-1-(5-phospho-D-ribosyl)imidazole-4-carboxamide. Its pathway is purine metabolism; IMP biosynthesis via de novo pathway; 5-formamido-1-(5-phospho-D-ribosyl)imidazole-4-carboxamide from 5-amino-1-(5-phospho-D-ribosyl)imidazole-4-carboxamide (10-formyl THF route): step 1/1. The protein operates within purine metabolism; IMP biosynthesis via de novo pathway; IMP from 5-formamido-1-(5-phospho-D-ribosyl)imidazole-4-carboxamide: step 1/1. This is Bifunctional purine biosynthesis protein PurH from Neisseria meningitidis serogroup B (strain ATCC BAA-335 / MC58).